Here is a 121-residue protein sequence, read N- to C-terminus: uncharacterized protein (121 aa).

The 44-residue stretch at 43 to 86 (LKECSSHVAAFADCSKDKYISVVWECRELQQLMKNCLVEYTTSE) folds into the CHCH domain. 2 short sequence motifs (cx9C motif) span residues 46–56 (CSSHVAAFADC) and 68–78 (CRELQQLMKNC). 2 disulfide bridges follow: C46/C78 and C56/C68.

This sequence belongs to the CMC family.

This is an uncharacterized protein from Dictyostelium discoideum (Social amoeba).